We begin with the raw amino-acid sequence, 517 residues long: Salicyloyl-CoA 5-hydroxylase (517 aa).

This sequence belongs to the aromatic-ring hydroxylase family. KMO subfamily.

It catalyses the reaction 2-hydroxybenzoyl-CoA + NADH + O2 + H(+) = 2,5-dihydroxybenzoyl-CoA + NAD(+) + H2O. Functionally, involved in the degradation of salicylate via a pathway involving coenzyme A derivative. Catalyzes the aromatic hydroxylation of salicylyl-CoA to yield gentisyl-CoA. In Streptomyces sp, this protein is Salicyloyl-CoA 5-hydroxylase.